Reading from the N-terminus, the 364-residue chain is tRNA 2-selenouridine synthase (364 aa).

Residues 12–135 enclose the Rhodanese domain; it reads FLNDRPMMDT…MRTFLLDTTE (124 aa). The S-selanylcysteine intermediate role is filled by cysteine 95.

It belongs to the SelU family. As to quaternary structure, monomer.

It carries out the reaction 5-methylaminomethyl-2-thiouridine(34) in tRNA + selenophosphate + (2E)-geranyl diphosphate + H2O + H(+) = 5-methylaminomethyl-2-selenouridine(34) in tRNA + (2E)-thiogeraniol + phosphate + diphosphate. It catalyses the reaction 5-methylaminomethyl-2-thiouridine(34) in tRNA + (2E)-geranyl diphosphate = 5-methylaminomethyl-S-(2E)-geranyl-thiouridine(34) in tRNA + diphosphate. The enzyme catalyses 5-methylaminomethyl-S-(2E)-geranyl-thiouridine(34) in tRNA + selenophosphate + H(+) = 5-methylaminomethyl-2-(Se-phospho)selenouridine(34) in tRNA + (2E)-thiogeraniol. The catalysed reaction is 5-methylaminomethyl-2-(Se-phospho)selenouridine(34) in tRNA + H2O = 5-methylaminomethyl-2-selenouridine(34) in tRNA + phosphate. Its function is as follows. Involved in the post-transcriptional modification of the uridine at the wobble position (U34) of tRNA(Lys), tRNA(Glu) and tRNA(Gln). Catalyzes the conversion of 2-thiouridine (S2U-RNA) to 2-selenouridine (Se2U-RNA). Acts in a two-step process involving geranylation of 2-thiouridine (S2U) to S-geranyl-2-thiouridine (geS2U) and subsequent selenation of the latter derivative to 2-selenouridine (Se2U) in the tRNA chain. The chain is tRNA 2-selenouridine synthase from Pseudomonas fluorescens (strain ATCC BAA-477 / NRRL B-23932 / Pf-5).